The primary structure comprises 271 residues: MCSLATNLLLPSKMKPVFPEKLSTSSLCVTTRRSKMKNRSIVPVARLFGPAIFEASKLKVLFLGVDEKKHPAKLPRTYTLTHSDITAKLTLAISQSINNSQLQGWANKLFRDEVVGEWKKVKGKMSLHVHCHISGGHFFLNLIAKLRYYIFCKELPVVLEAFAHGDEYLLNNHPELQESPVWVYFHSNIPEYNKVECWGPLWEAMSQHQHDGRTHKKSETLPELPCPDECKCCFPTVSTIPWSHRHYQHTAADENVADGLLEIPNPGKSKG.

The transit peptide at 1-54 (MCSLATNLLLPSKMKPVFPEKLSTSSLCVTTRRSKMKNRSIVPVARLFGPAIFE) directs the protein to the chloroplast.

This sequence belongs to the staygreen family. In terms of assembly, interacts with the light harvesting complex II (LHCII). Interacts with the chlorophyll catabolic enzyme (CCE) RCCR.

It localises to the plastid. It is found in the chloroplast thylakoid membrane. The catalysed reaction is chlorophyll a + 2 H(+) = pheophytin a + Mg(2+). Functionally, magnesium chelatase involved in chlorophyll a degradation in the chlorophyll-protein complexes of photosystem I (PSI) and photosystem II (PSII). Contributes to the degradation of PSI and PSII in the thylakoid membranes. Required to trigger chlorophyll degradation during natural and dark-induced leaf senescence. Mediates chlorophyll degradation during embryo degreening. Recombinant SGR2 possesses high dechelating activity against chlorophyll a, very low activity against chlorophyllide a, and no activity against chlorophyll b. The chain is Magnesium dechelatase SGR2, chloroplastic from Arabidopsis thaliana (Mouse-ear cress).